The primary structure comprises 292 residues: Elongation factor Ts (292 aa).

The tract at residues 80–83 (TDFV) is involved in Mg(2+) ion dislocation from EF-Tu.

It belongs to the EF-Ts family.

Its subcellular location is the cytoplasm. Associates with the EF-Tu.GDP complex and induces the exchange of GDP to GTP. It remains bound to the aminoacyl-tRNA.EF-Tu.GTP complex up to the GTP hydrolysis stage on the ribosome. The sequence is that of Elongation factor Ts from Cupriavidus metallidurans (strain ATCC 43123 / DSM 2839 / NBRC 102507 / CH34) (Ralstonia metallidurans).